The following is a 523-amino-acid chain: GMP synthase [glutamine-hydrolyzing] (523 aa).

Residues 9–198 (PVLVVDYGAQ…LTEIAGLEQN (190 aa)) form the Glutamine amidotransferase type-1 domain. Cysteine 86 (nucleophile) is an active-site residue. Active-site residues include histidine 172 and glutamate 174. The GMPS ATP-PPase domain occupies 199 to 397 (WTAANIAEEL…LGLPEVIVAR (199 aa)). Position 227-233 (227-233 (SGGVDSA)) interacts with ATP.

As to quaternary structure, homodimer.

It catalyses the reaction XMP + L-glutamine + ATP + H2O = GMP + L-glutamate + AMP + diphosphate + 2 H(+). Its pathway is purine metabolism; GMP biosynthesis; GMP from XMP (L-Gln route): step 1/1. Its function is as follows. Catalyzes the synthesis of GMP from XMP. In Corynebacterium efficiens (strain DSM 44549 / YS-314 / AJ 12310 / JCM 11189 / NBRC 100395), this protein is GMP synthase [glutamine-hydrolyzing].